Here is a 233-residue protein sequence, read N- to C-terminus: Uracil-DNA glycosylase (233 aa).

Catalysis depends on aspartate 70, which acts as the Proton acceptor.

The protein belongs to the uracil-DNA glycosylase (UDG) superfamily. UNG family.

It localises to the cytoplasm. It carries out the reaction Hydrolyzes single-stranded DNA or mismatched double-stranded DNA and polynucleotides, releasing free uracil.. In terms of biological role, excises uracil residues from the DNA which can arise as a result of misincorporation of dUMP residues by DNA polymerase or due to deamination of cytosine. The protein is Uracil-DNA glycosylase of Helicobacter pylori (strain G27).